The sequence spans 480 residues: Coronin-2B (480 aa).

5 WD repeats span residues 85 to 125 (GHQG…LKRN), 135 to 177 (GHSR…KMID), 179 to 217 (HTDV…VLQE), 220 to 263 (CKNH…MPMI), and 265 to 308 (EEID…PYLS). The stretch at 436–479 (NELLRMFFRQQDEIRRLKEELAQKDIRLRQLQLELKNLRNNPKN) forms a coiled coil.

Belongs to the WD repeat coronin family. Binds to F-actin and to vinculin.

The protein localises to the cytoplasm. It localises to the cytoskeleton. May play a role in the reorganization of neuronal actin structure. This is Coronin-2B (Coro2b) from Mus musculus (Mouse).